A 211-amino-acid polypeptide reads, in one-letter code: MNKAKRLEILTRLRENNPHPTTELNFSSPFELLIAVLLSAQATDVSVNKATAKLYPVANTPAAMLELGVEGVKTYIKTIGLYNSKAENIIKTCRILLEQHNGEVPEDRAALEALPGVGRKTANVVLNTAFGWPTIAVDTHIFRVCNRTQFAPGKNVEQVEEKLLKVVPAEFKVDCHHWLILHGRYTCIARKPRCGSCIIEDLCEYKEKVDI.

The HhH domain occupies 108–127; it reads RAALEALPGVGRKTANVVLN. [4Fe-4S] cluster is bound by residues C187, C194, C197, and C203.

Belongs to the Nth/MutY family. [4Fe-4S] cluster is required as a cofactor.

It catalyses the reaction 2'-deoxyribonucleotide-(2'-deoxyribose 5'-phosphate)-2'-deoxyribonucleotide-DNA = a 3'-end 2'-deoxyribonucleotide-(2,3-dehydro-2,3-deoxyribose 5'-phosphate)-DNA + a 5'-end 5'-phospho-2'-deoxyribonucleoside-DNA + H(+). DNA repair enzyme that has both DNA N-glycosylase activity and AP-lyase activity. The DNA N-glycosylase activity releases various damaged pyrimidines from DNA by cleaving the N-glycosidic bond, leaving an AP (apurinic/apyrimidinic) site. The AP-lyase activity cleaves the phosphodiester bond 3' to the AP site by a beta-elimination, leaving a 3'-terminal unsaturated sugar and a product with a terminal 5'-phosphate. The chain is Endonuclease III from Escherichia coli O6:H1 (strain CFT073 / ATCC 700928 / UPEC).